Here is a 443-residue protein sequence, read N- to C-terminus: Serine--tRNA ligase (443 aa).

250–252 serves as a coordination point for L-serine; the sequence is TSE. 281-283 lines the ATP pocket; sequence RSE. Glu-304 serves as a coordination point for L-serine. 368–371 provides a ligand contact to ATP; the sequence is EISS. Ser-403 is an L-serine binding site.

It belongs to the class-II aminoacyl-tRNA synthetase family. Type-1 seryl-tRNA synthetase subfamily. In terms of assembly, homodimer. The tRNA molecule binds across the dimer.

Its subcellular location is the cytoplasm. It catalyses the reaction tRNA(Ser) + L-serine + ATP = L-seryl-tRNA(Ser) + AMP + diphosphate + H(+). The enzyme catalyses tRNA(Sec) + L-serine + ATP = L-seryl-tRNA(Sec) + AMP + diphosphate + H(+). The protein operates within aminoacyl-tRNA biosynthesis; selenocysteinyl-tRNA(Sec) biosynthesis; L-seryl-tRNA(Sec) from L-serine and tRNA(Sec): step 1/1. In terms of biological role, catalyzes the attachment of serine to tRNA(Ser). Is also able to aminoacylate tRNA(Sec) with serine, to form the misacylated tRNA L-seryl-tRNA(Sec), which will be further converted into selenocysteinyl-tRNA(Sec). The sequence is that of Serine--tRNA ligase from Variovorax paradoxus (strain S110).